A 55-amino-acid chain; its full sequence is Male-specific sperm protein Mst84Dc (55 aa).

Belongs to the MST(3)CGP family. In terms of tissue distribution, testis.

This is Male-specific sperm protein Mst84Dc (Mst84Dc) from Drosophila melanogaster (Fruit fly).